Here is a 520-residue protein sequence, read N- to C-terminus: Glucose starvation modulator protein 1 (520 aa).

Residues 20–48 (CVFCHEKHLQCSNERPCKNCVKRGLAHEC) constitute a DNA-binding region (zn(2)-C6 fungal-type). The PAS domain occupies 376–445 (DYEKLSQLNS…FRLFKTVAVG (70 aa)).

It belongs to the ERT1/acuK family.

Its subcellular location is the nucleus. Transcription factor which regulates nonfermentable carbon utilization. The protein is Glucose starvation modulator protein 1 (GSM1) of Scheffersomyces stipitis (strain ATCC 58785 / CBS 6054 / NBRC 10063 / NRRL Y-11545) (Yeast).